The primary structure comprises 523 residues: Sugar carrier protein C (523 aa).

Over 1–25 (MPAVGGIPPSGGNRKVYPGNLTLYV) the chain is Cytoplasmic. The next 12 membrane-spanning stretches (helical) occupy residues 26 to 46 (TVTC…IGIS), 86 to 106 (MFTS…STIT), 120 to 140 (VLFC…MLIL), 143 to 163 (ILLG…LSEM), 172 to 192 (LNIG…VLNY), 205 to 225 (LSLG…LVLP), 298 to 320 (LTGI…FGSD), 327 to 347 (VITG…VDKW), 351 to 371 (FLFL…AACI), 387 to 407 (WYAV…AWSW), 433 to 453 (SVNM…LCHL), and 456 to 476 (GLFI…YYFL). Residues 477 to 523 (PETKGIPIEEMGQVWKQHWYWSRYVVDEDYPNGGLEMGKEGRIPKNV) are Cytoplasmic-facing.

The protein belongs to the major facilitator superfamily. Sugar transporter (TC 2.A.1.1) family.

Its subcellular location is the membrane. This Ricinus communis (Castor bean) protein is Sugar carrier protein C (STC).